Reading from the N-terminus, the 276-residue chain is Putative pyruvate, phosphate dikinase regulatory protein (276 aa).

153 to 160 serves as a coordination point for ADP; sequence GISRTSKT.

It belongs to the pyruvate, phosphate/water dikinase regulatory protein family. PDRP subfamily.

It catalyses the reaction N(tele)-phospho-L-histidyl/L-threonyl-[pyruvate, phosphate dikinase] + ADP = N(tele)-phospho-L-histidyl/O-phospho-L-threonyl-[pyruvate, phosphate dikinase] + AMP + H(+). The enzyme catalyses N(tele)-phospho-L-histidyl/O-phospho-L-threonyl-[pyruvate, phosphate dikinase] + phosphate + H(+) = N(tele)-phospho-L-histidyl/L-threonyl-[pyruvate, phosphate dikinase] + diphosphate. Functionally, bifunctional serine/threonine kinase and phosphorylase involved in the regulation of the pyruvate, phosphate dikinase (PPDK) by catalyzing its phosphorylation/dephosphorylation. The chain is Putative pyruvate, phosphate dikinase regulatory protein from Brucella anthropi (strain ATCC 49188 / DSM 6882 / CCUG 24695 / JCM 21032 / LMG 3331 / NBRC 15819 / NCTC 12168 / Alc 37) (Ochrobactrum anthropi).